The following is a 161-amino-acid chain: Phosphopantetheine adenylyltransferase (161 aa).

A substrate-binding site is contributed by Thr-11. Residues 11-12 (TF) and His-19 each bind ATP. The substrate site is built by Lys-43, Thr-75, and Arg-89. ATP contacts are provided by residues 90 to 92 (GLR), Glu-100, and 125 to 131 (YSFLSSS).

It belongs to the bacterial CoaD family. Homohexamer. It depends on Mg(2+) as a cofactor.

Its subcellular location is the cytoplasm. The enzyme catalyses (R)-4'-phosphopantetheine + ATP + H(+) = 3'-dephospho-CoA + diphosphate. The protein operates within cofactor biosynthesis; coenzyme A biosynthesis; CoA from (R)-pantothenate: step 4/5. In terms of biological role, reversibly transfers an adenylyl group from ATP to 4'-phosphopantetheine, yielding dephospho-CoA (dPCoA) and pyrophosphate. This is Phosphopantetheine adenylyltransferase from Listeria innocua serovar 6a (strain ATCC BAA-680 / CLIP 11262).